The primary structure comprises 390 residues: Odorant receptor 85b (390 aa).

Residues 1 to 30 (MEKLMKYASFFYTAVGIRPYTNGEESKMNK) lie on the Cytoplasmic side of the membrane. Residues 31-51 (LIFHIVFWSNVINLSFVGLFE) form a helical membrane-spanning segment. Residues 52-66 (SIYVYSAFMDNKFLE) lie on the Extracellular side of the membrane. A helical membrane pass occupies residues 67 to 87 (AVTALSYIGFVTVGMSKMFFI). Topologically, residues 88–126 (RWKKTAITELINELKEIYPNGLIREERYNLPMYLGTCSR) are cytoplasmic. Residues 127 to 147 (ISLIYSLLYSVLIWTFNLFCV) form a helical membrane-spanning segment. The Extracellular portion of the chain corresponds to 148 to 200 (MEYWVYDKWLNIRVVGKQLPYLMYIPWKWQDNWSYYPLLFSQNFAGYTSAAGQ). N179 carries N-linked (GlcNAc...) asparagine glycosylation. Residues 201 to 221 (ISTDVLLCAVATQLVMHFDFL) traverse the membrane as a helical segment. The Cytoplasmic portion of the chain corresponds to 222 to 260 (SNSMERHELSGDWKKDSRFLVDIVRYHERILRLSDAVND). Residues 261-281 (IFGIPLLLNFMVSSFVICFVG) form a helical membrane-spanning segment. The Extracellular portion of the chain corresponds to 282 to 291 (FQMTVGVPPD). The chain crosses the membrane as a helical span at residues 292–312 (IVVKLFLFLVSSMSQVYLICH). Residues 313-360 (YGQLVADASYGFSVATYNQKWYKADVRYKRALVIIIARSQKVTFLKAT) are Cytoplasmic-facing. The helical transmembrane segment at 361-381 (IFLDITRSTMTDLLQISYKFF) threads the bilayer. The Extracellular portion of the chain corresponds to 382-390 (ALLRTMYTQ).

Belongs to the insect chemoreceptor superfamily. Heteromeric odorant receptor channel (TC 1.A.69) family. Or49a subfamily. In terms of assembly, interacts with Orco. Complexes exist early in the endomembrane system in olfactory sensory neurons (OSNs), coupling these complexes to the conserved ciliary trafficking pathway. In terms of tissue distribution, expressed in olfactory sensory neurons in the antenna.

Its subcellular location is the cell membrane. Its function is as follows. Odorant receptor which mediates acceptance or avoidance behavior, depending on its substrates. The odorant receptor repertoire encodes a large collection of odor stimuli that vary widely in identity, intensity, and duration. Forms a complex with Orco to form odorant-sensing units, providing sensitive and prolonged odorant signaling and calcium permeability. Involved in the behavioral responses to 2-heptanone, amyl acetate, and butyl acetate. The protein is Odorant receptor 85b (Or85b) of Drosophila melanogaster (Fruit fly).